The following is a 128-amino-acid chain: Dehydrin Xero 1 (128 aa).

Positions M1–Q19 are enriched in polar residues. The interval M1 to H128 is disordered. Composition is skewed to low complexity over residues P23–A41 and G48–S60. Residues G75 to N91 show a composition bias toward basic and acidic residues. Residues K92–D104 are compositionally biased toward polar residues. A compositionally biased stretch (basic and acidic residues) spans T107 to H128.

Belongs to the plant dehydrin family.

The polypeptide is Dehydrin Xero 1 (XERO1) (Arabidopsis thaliana (Mouse-ear cress)).